Consider the following 23-residue polypeptide: Aurein-4.1 (23 aa).

Belongs to the frog skin active peptide (FSAP) family. Aurein subfamily. Expressed by the skin dorsal glands.

The protein resides in the secreted. In terms of biological role, has no antimicrobial or anticancer activity. This Ranoidea aurea (Green and golden bell frog) protein is Aurein-4.1.